A 246-amino-acid chain; its full sequence is Proteasome subunit alpha (246 aa).

This sequence belongs to the peptidase T1A family. The 20S proteasome core is composed of 14 alpha and 14 beta subunits that assemble into four stacked heptameric rings, resulting in a barrel-shaped structure. The two inner rings, each composed of seven catalytic beta subunits, are sandwiched by two outer rings, each composed of seven alpha subunits. The catalytic chamber with the active sites is on the inside of the barrel. Has a gated structure, the ends of the cylinder being occluded by the N-termini of the alpha-subunits. Is capped at one or both ends by the proteasome regulatory ATPase, PAN.

It localises to the cytoplasm. With respect to regulation, the formation of the proteasomal ATPase PAN-20S proteasome complex, via the docking of the C-termini of PAN into the intersubunit pockets in the alpha-rings, triggers opening of the gate for substrate entry. Interconversion between the open-gate and close-gate conformations leads to a dynamic regulation of the 20S proteasome proteolysis activity. In terms of biological role, component of the proteasome core, a large protease complex with broad specificity involved in protein degradation. The protein is Proteasome subunit alpha of Methanopyrus kandleri (strain AV19 / DSM 6324 / JCM 9639 / NBRC 100938).